Consider the following 121-residue polypeptide: uncharacterized protein (121 aa).

Disordered stretches follow at residues 38 to 76 (NQMA…KYQQ) and 91 to 121 (SVLR…KQEN). Residues 43 to 63 (KRNKQSKKPKQTSKGVKKSSK) show a composition bias toward basic residues. Low complexity predominate over residues 64–76 (QNKNSSKNNKYQQ).

This is an uncharacterized protein from Schizosaccharomyces pombe (strain 972 / ATCC 24843) (Fission yeast).